The chain runs to 218 residues: Trimethylamine corrinoid protein 2 (218 aa).

The region spanning 1–92 (MAGKEEIIAK…EMEKRKSQTK (92 aa)) is the B12-binding N-terminal domain. The B12-binding domain maps to 94–218 (LGTVIIGTIE…AKVKAALKVG (125 aa)). A methylcob(III)alamin-binding site is contributed by H107.

The protein belongs to the methylamine corrinoid protein family. As to quaternary structure, can form a complex with MttB.

It functions in the pathway one-carbon metabolism; methanogenesis from trimethylamine. In terms of biological role, acts probably as a methyl group carrier between MttB and either MtbA or MtaA. This chain is Trimethylamine corrinoid protein 2 (mttC2), found in Methanosarcina mazei (strain ATCC BAA-159 / DSM 3647 / Goe1 / Go1 / JCM 11833 / OCM 88) (Methanosarcina frisia).